The chain runs to 131 residues: Small ribosomal subunit protein uS11 (131 aa).

It belongs to the universal ribosomal protein uS11 family. In terms of assembly, part of the 30S ribosomal subunit. Interacts with proteins S7 and S18. Binds to IF-3.

Its function is as follows. Located on the platform of the 30S subunit, it bridges several disparate RNA helices of the 16S rRNA. Forms part of the Shine-Dalgarno cleft in the 70S ribosome. This chain is Small ribosomal subunit protein uS11, found in Deinococcus radiodurans (strain ATCC 13939 / DSM 20539 / JCM 16871 / CCUG 27074 / LMG 4051 / NBRC 15346 / NCIMB 9279 / VKM B-1422 / R1).